A 1406-amino-acid chain; its full sequence is Enhancer of mRNA-decapping protein 4 (1406 aa).

Position 2 is an N-acetylalanine (Ala2). Residues Ser3 and Ser6 each carry the phosphoserine modification. Residue Lys125 is modified to N6-acetyllysine. 4 WD repeats span residues 174 to 214, 230 to 277, 295 to 334, and 342 to 393; these read GFTG…GKIQ, NHFR…SSHN, GHST…QDEP, and PHDG…CLQT. A phosphoserine mark is found at Ser560, Ser565, Ser583, and Ser585. 2 disordered regions span residues 604-631 and 667-686; these read SLQQ…SSSS and SLTL…SLLP. Low complexity predominate over residues 609 to 631; the sequence is SASPSSSSSSSSSSSSSSSSSSS. 4 positions are modified to phosphoserine: Ser680, Ser712, Ser727, and Ser729. A disordered region spans residues 719 to 744; it reads EPLGLPQASPSRTRSPDVISSASTAL. Residues 726 to 744 show a composition bias toward polar residues; the sequence is ASPSRTRSPDVISSASTAL. Thr731 carries the post-translational modification Phosphothreonine. Phosphoserine is present on residues Ser733 and Ser745. Disordered regions lie at residues 782–855 and 873–951; these read HLLS…NGLQ and QRDS…VAEP. Polar residues-rich tracts occupy residues 823–832 and 841–852; these read EVATPDSQVW and ETCSTLTESPRN. The residue at position 826 (Thr826) is a Phosphothreonine. 2 positions are modified to phosphoserine: Ser849 and Ser876. At Thr879 the chain carries Phosphothreonine. Residues Ser880, Ser884, Ser892, Ser895, and Ser897 each carry the phosphoserine modification. The residue at position 906 (Thr906) is a Phosphothreonine. Residues 971–1030 adopt a coiled-coil conformation; that stretch reads HNQEELLQRLCAQLEGLQSTVTDHVERALETRHEQEQRRLERALAEGQQRGGQLQEQLTQ. Ser1385 is subject to Phosphoserine.

It belongs to the WD repeat EDC4 family. In terms of assembly, part of a decapping complex consisting of DCP1A, DCP2, EDC3, EDC4 and probably DDX6. Part of a complex consisting of DCP1A, EDC3, EDC4 and DDX6. Part of a complex consisting of DCP1B, EDC3, EDC4 and DDX6. Interacts with DCP2. Interacts with RC3H1. Interacts with NBDY. Interacts with Tex19.1 and, probably, Tex19.2. Interacts with LSM14A. Interacts with DDX6.

It localises to the cytoplasm. The protein resides in the P-body. It is found in the nucleus. In the process of mRNA degradation, seems to play a role in mRNA decapping. Component of a complex containing DCP2 and DCP1A which functions in decapping of ARE-containing mRNAs. Promotes complex formation between DCP1A and DCP2. Enhances the catalytic activity of DCP2 (in vitro). This Mus musculus (Mouse) protein is Enhancer of mRNA-decapping protein 4.